Reading from the N-terminus, the 349-residue chain is NADH-quinone oxidoreductase subunit H (349 aa).

Helical transmembrane passes span 11–31 (FPLL…LLLV), 83–103 (GVFL…WAVI), 116–136 (VGLL…IMGG), 162–182 (IGFV…TTIV), 200–220 (FLDW…ISAL), 252–272 (LFFL…TILF), 288–308 (VPGI…FAMV), and 323–343 (LGWK…AAFL).

It belongs to the complex I subunit 1 family. As to quaternary structure, NDH-1 is composed of 14 different subunits. Subunits NuoA, H, J, K, L, M, N constitute the membrane sector of the complex.

The protein localises to the cell inner membrane. It carries out the reaction a quinone + NADH + 5 H(+)(in) = a quinol + NAD(+) + 4 H(+)(out). NDH-1 shuttles electrons from NADH, via FMN and iron-sulfur (Fe-S) centers, to quinones in the respiratory chain. The immediate electron acceptor for the enzyme in this species is believed to be ubiquinone. Couples the redox reaction to proton translocation (for every two electrons transferred, four hydrogen ions are translocated across the cytoplasmic membrane), and thus conserves the redox energy in a proton gradient. This subunit may bind ubiquinone. This chain is NADH-quinone oxidoreductase subunit H, found in Bartonella henselae (strain ATCC 49882 / DSM 28221 / CCUG 30454 / Houston 1) (Rochalimaea henselae).